The following is a 169-amino-acid chain: Phosphopantetheine adenylyltransferase (169 aa).

Residue S10 participates in substrate binding. ATP-binding positions include 10-11 and H18; that span reads SF. Substrate contacts are provided by K42, T79, and R93. Residues 94-96, E104, and 129-135 contribute to the ATP site; these read GLR and VRPITAT.

The protein belongs to the bacterial CoaD family. Homohexamer. Mg(2+) is required as a cofactor.

The protein localises to the cytoplasm. The enzyme catalyses (R)-4'-phosphopantetheine + ATP + H(+) = 3'-dephospho-CoA + diphosphate. The protein operates within cofactor biosynthesis; coenzyme A biosynthesis; CoA from (R)-pantothenate: step 4/5. In terms of biological role, reversibly transfers an adenylyl group from ATP to 4'-phosphopantetheine, yielding dephospho-CoA (dPCoA) and pyrophosphate. This Rhodopseudomonas palustris (strain ATCC BAA-98 / CGA009) protein is Phosphopantetheine adenylyltransferase.